Consider the following 192-residue polypeptide: Elongation factor P (192 aa).

N6-(3,6-diaminohexanoyl)-5-hydroxylysine is present on K38.

Belongs to the elongation factor P family. In terms of processing, may be beta-lysylated on the epsilon-amino group of Lys-38 by the combined action of EpmA and EpmB, and then hydroxylated on the C5 position of the same residue by EpmC (if this protein is present). Lysylation is critical for the stimulatory effect of EF-P on peptide-bond formation. The lysylation moiety may extend toward the peptidyltransferase center and stabilize the terminal 3-CCA end of the tRNA. Hydroxylation of the C5 position on Lys-38 may allow additional potential stabilizing hydrogen-bond interactions with the P-tRNA.

It is found in the cytoplasm. The protein operates within protein biosynthesis; polypeptide chain elongation. Involved in peptide bond synthesis. Alleviates ribosome stalling that occurs when 3 or more consecutive Pro residues or the sequence PPG is present in a protein, possibly by augmenting the peptidyl transferase activity of the ribosome. Modification of Lys-38 is required for alleviation. This chain is Elongation factor P, found in Mannheimia succiniciproducens (strain KCTC 0769BP / MBEL55E).